The sequence spans 642 residues: Kinesin-like protein KIF12 (642 aa).

A compositionally biased stretch (basic and acidic residues) spans Met1–Arg13. The segment at Met1–Pro25 is disordered. Position 6 is a phosphoserine (Ser6). A Kinesin motor domain is found at Pro25–Ile360. ATP is bound at residue Gly104–Thr111. Phosphoserine is present on Ser369. Residues Gln376–Leu465 adopt a coiled-coil conformation. Disordered stretches follow at residues Gly531–Asp561 and Pro579–Cys642. Pro residues predominate over residues Trp538–Pro548. The segment covering Thr610–Cys642 has biased composition (polar residues). Ser634 carries the post-translational modification Phosphoserine.

It belongs to the TRAFAC class myosin-kinesin ATPase superfamily. Kinesin family. Expressed in the liver.

The protein resides in the cytoplasm. Its subcellular location is the cytoskeleton. This is Kinesin-like protein KIF12 (Kif12) from Mus musculus (Mouse).